A 327-amino-acid chain; its full sequence is Tyrosine--tRNA ligase (327 aa).

Tyr33 serves as a coordination point for L-tyrosine. Residues 38 to 46 (PSGVLHLGH) carry the 'HIGH' region motif. Residues Tyr154, Gln158, Asp161, and Gln176 each contribute to the L-tyrosine site. The 'KMSKS' region motif lies at 212-216 (KMSSS). Position 215 (Ser215) interacts with ATP.

The protein belongs to the class-I aminoacyl-tRNA synthetase family. TyrS type 3 subfamily. As to quaternary structure, homodimer.

The protein localises to the cytoplasm. The catalysed reaction is tRNA(Tyr) + L-tyrosine + ATP = L-tyrosyl-tRNA(Tyr) + AMP + diphosphate + H(+). Functionally, catalyzes the attachment of tyrosine to tRNA(Tyr) in a two-step reaction: tyrosine is first activated by ATP to form Tyr-AMP and then transferred to the acceptor end of tRNA(Tyr). In Halobacterium salinarum (strain ATCC 29341 / DSM 671 / R1), this protein is Tyrosine--tRNA ligase.